The following is a 141-amino-acid chain: Hemoglobin subunit alpha-A (141 aa).

One can recognise a Globin domain in the interval 1 to 141 (VLSAADKNNV…VGTVLTAKYR (141 aa)). An O2-binding site is contributed by H58. H87 provides a ligand contact to heme b.

It belongs to the globin family. As to quaternary structure, heterotetramer of two alpha chains and two beta chains. As to expression, red blood cells.

Its function is as follows. Involved in oxygen transport from the lung to the various peripheral tissues. In Phasianus colchicus colchicus (Black-necked pheasant), this protein is Hemoglobin subunit alpha-A (HBAA).